The chain runs to 194 residues: ATP-dependent Clp protease proteolytic subunit 1 (194 aa).

Serine 99 (nucleophile) is an active-site residue. The active site involves histidine 124.

Belongs to the peptidase S14 family. In terms of assembly, fourteen ClpP subunits assemble into 2 heptameric rings which stack back to back to give a disk-like structure with a central cavity, resembling the structure of eukaryotic proteasomes.

The protein resides in the cytoplasm. The catalysed reaction is Hydrolysis of proteins to small peptides in the presence of ATP and magnesium. alpha-casein is the usual test substrate. In the absence of ATP, only oligopeptides shorter than five residues are hydrolyzed (such as succinyl-Leu-Tyr-|-NHMec, and Leu-Tyr-Leu-|-Tyr-Trp, in which cleavage of the -Tyr-|-Leu- and -Tyr-|-Trp bonds also occurs).. Its function is as follows. Cleaves peptides in various proteins in a process that requires ATP hydrolysis. Has a chymotrypsin-like activity. Plays a major role in the degradation of misfolded proteins. The protein is ATP-dependent Clp protease proteolytic subunit 1 of Borreliella burgdorferi (strain ATCC 35210 / DSM 4680 / CIP 102532 / B31) (Borrelia burgdorferi).